Reading from the N-terminus, the 77-residue chain is YPEPTEGSIGASGAKTSWPEVVGMSAEKAKEIILRDKPNAQIEVIPVDAMVPLNFNPNRVFVLVHKATTVAZVSRVG.

This sequence belongs to the protease inhibitor I13 (potato type I serine protease inhibitor) family.

Its function is as follows. Inhibits both subtilisin and chymotrypsin. The sequence is that of Subtilisin-chymotrypsin inhibitor CI-1C from Hordeum vulgare (Barley).